Consider the following 22-residue polypeptide: Brevinin-1OKc (22 aa).

Lysine 22 bears the Lysine amide mark.

As to expression, expressed by the skin glands.

The protein localises to the secreted. Its function is as follows. Antimicrobial peptide. Active against Gram-negative bacterium E.coli (MIC=6 uM) and against Gram-positive bacterium S.aureus (MIC=12.5 uM). The chain is Brevinin-1OKc from Nidirana okinavana (Kampira Falls frog).